The sequence spans 933 residues: 2-oxoglutarate dehydrogenase E1 component (933 aa).

This sequence belongs to the alpha-ketoglutarate dehydrogenase family. Homodimer. Part of the 2-oxoglutarate dehydrogenase (OGDH) complex composed of E1 (2-oxoglutarate dehydrogenase), E2 (dihydrolipoamide succinyltransferase) and E3 (dihydrolipoamide dehydrogenase); the complex contains multiple copies of the three enzymatic components (E1, E2 and E3). Thiamine diphosphate is required as a cofactor.

It carries out the reaction N(6)-[(R)-lipoyl]-L-lysyl-[protein] + 2-oxoglutarate + H(+) = N(6)-[(R)-S(8)-succinyldihydrolipoyl]-L-lysyl-[protein] + CO2. In terms of biological role, E1 component of the 2-oxoglutarate dehydrogenase (OGDH) complex which catalyzes the decarboxylation of 2-oxoglutarate, the first step in the conversion of 2-oxoglutarate to succinyl-CoA and CO(2). The polypeptide is 2-oxoglutarate dehydrogenase E1 component (sucA) (Rickettsia typhi (strain ATCC VR-144 / Wilmington)).